We begin with the raw amino-acid sequence, 373 residues long: DNA primase small subunit PriS (373 aa).

Active-site residues include D95, D97, and D281.

This sequence belongs to the eukaryotic-type primase small subunit family. In terms of assembly, heterodimer of a small subunit (PriS) and a large subunit (PriL). Requires Mg(2+) as cofactor. The cofactor is Mn(2+).

Its function is as follows. Catalytic subunit of DNA primase, an RNA polymerase that catalyzes the synthesis of short RNA molecules used as primers for DNA polymerase during DNA replication. The small subunit contains the primase catalytic core and has DNA synthesis activity on its own. Binding to the large subunit stabilizes and modulates the activity, increasing the rate of DNA synthesis while decreasing the length of the DNA fragments, and conferring RNA synthesis capability. The DNA polymerase activity may enable DNA primase to also catalyze primer extension after primer synthesis. May also play a role in DNA repair. This Nitrosopumilus maritimus (strain SCM1) protein is DNA primase small subunit PriS.